The chain runs to 107 residues: Heme-degrading monooxygenase (107 aa).

An ABM domain is found at 2–94 (IIVTNTAKIT…YILDNKITYY (93 aa)). Asn6 is a Fe cation binding site. His76 is a binding site for heme.

This sequence belongs to the antibiotic biosynthesis monooxygenase family. Heme-degrading monooxygenase IsdG subfamily. Homodimer.

Its subcellular location is the cytoplasm. The enzyme catalyses heme b + 3 reduced [NADPH--hemoprotein reductase] + 3 O2 = biliverdin IXalpha + CO + Fe(2+) + 3 oxidized [NADPH--hemoprotein reductase] + 3 H2O + H(+). Its function is as follows. Allows bacterial pathogens to use the host heme as an iron source. Catalyzes the oxidative degradation of the heme macrocyclic porphyrin ring to the biliverdin in the presence of a suitable electron donor such as ascorbate or NADPH--cytochrome P450 reductase, with subsequent release of free iron. In Bacillus thuringiensis subsp. konkukian (strain 97-27), this protein is Heme-degrading monooxygenase.